The primary structure comprises 639 residues: 3D-(3,5/4)-trihydroxycyclohexane-1,2-dione hydrolase (639 aa).

Glu-65 contacts thiamine diphosphate. Positions 437–517 (SLPGDLQRMW…INIILFDNSG (81 aa)) are thiamine pyrophosphate binding. Residues Asp-488 and Asn-515 each contribute to the Mg(2+) site.

It belongs to the TPP enzyme family. It depends on Mg(2+) as a cofactor. Requires thiamine diphosphate as cofactor.

The enzyme catalyses 3D-3,5/4-trihydroxycyclohexane-1,2-dione + H2O = 5-deoxy-D-glucuronate + H(+). It functions in the pathway polyol metabolism; myo-inositol degradation into acetyl-CoA; acetyl-CoA from myo-inositol: step 3/7. Its function is as follows. Involved in the cleavage of the C1-C2 bond of 3D-(3,5/4)-trihydroxycyclohexane-1,2-dione (THcHDO) to yield 5-deoxy-glucuronate (5DG). The polypeptide is 3D-(3,5/4)-trihydroxycyclohexane-1,2-dione hydrolase (Geobacillus thermodenitrificans (strain NG80-2)).